The primary structure comprises 76 residues: Rhesus theta defensin-1/3 subunit A (76 aa).

The first 22 residues, methionine 1–alanine 22, serve as a signal peptide directing secretion. Residues arginine 23 to leucine 64 constitute a propeptide that is removed on maturation. The segment at alanine 25–histidine 45 is disordered. Arginine 65 participates in a covalent cross-link: Cyclopeptide (Arg-Cys) (interchain with C-73 in subunit A); in form RTD-3. Arginine 65 participates in a covalent cross-link: Cyclopeptide (Arg-Cys) (interchain with C-73 in subunit B); in form RTD-1. An intrachain disulfide couples cysteine 68 to cysteine 73. A Cyclopeptide (Cys-Arg) (interchain with R-65 in subunit A); in form RTD-3 cross-link involves residue cysteine 73. Residue cysteine 73 forms a Cyclopeptide (Cys-Arg) (interchain with R-65 in subunit B); in form RTD-1 linkage. Positions arginine 74–leucine 76 are excised as a propeptide.

This sequence belongs to the alpha-defensin family. Theta subfamily. As to quaternary structure, RTD-1 is a cyclic heterodimer composed of subunits A and B; disulfide-linked. RTD-3 is a cyclic homodimer composed of two subunits A; disulfide-linked. Post-translationally, forms a cyclic peptide with subunit A (RTD-3) or with subunit B (RTD-1). An additional intersubunit disulfide bond is formed. In terms of tissue distribution, RTD-1 is expressed in bone marrow. Detected in promyelocytes, myelocytes and mature neutrophils and monocytes.

In terms of biological role, RTD-1 and RTD-3 have similar antimicrobial activities against the Gram-positive bacteria S.aureus 502A and L.monocytogenes, the Gram-negative bacteria S.typhimurium and E.coli ML35, and the fungi C.albicans 16820 and C.neoformans 271A. The protein is Rhesus theta defensin-1/3 subunit A (RTD1A) of Macaca mulatta (Rhesus macaque).